The sequence spans 198 residues: Na(+)-translocating NADH-quinone reductase subunit E (198 aa).

The next 6 membrane-spanning stretches (helical) occupy residues 11 to 31, 39 to 59, 77 to 97, 110 to 130, 140 to 160, and 176 to 196; these read SIFI…FLAV, FGLG…NNLV, FLNF…LEMV, GIFL…SFMV, IVYG…LAGI, and LGIT…FSGV.

The protein belongs to the NqrDE/RnfAE family. As to quaternary structure, composed of six subunits; NqrA, NqrB, NqrC, NqrD, NqrE and NqrF. The N-terminus is blocked.

The protein localises to the cell inner membrane. The catalysed reaction is a ubiquinone + n Na(+)(in) + NADH + H(+) = a ubiquinol + n Na(+)(out) + NAD(+). This reaction is tightly coupled to the Na(+) pumping activity and specifically requires Na(+) for activity. Inhibited by korormicin and 2-N-heptyl-4-hydroxyquinoline N-oxide (HQNO). Its function is as follows. NQR complex catalyzes the reduction of ubiquinone-1 to ubiquinol by two successive reactions, coupled with the transport of Na(+) ions from the cytoplasm to the periplasm. NqrA to NqrE are probably involved in the second step, the conversion of ubisemiquinone to ubiquinol. The polypeptide is Na(+)-translocating NADH-quinone reductase subunit E (Vibrio alginolyticus).